The primary structure comprises 522 residues: Subtilisin-like protease 10 (522 aa).

Positions 1 to 19 (MFFFKGVVAVLSFFSAVNA) are cleaved as a signal peptide. Residues 20 to 117 (APFMKPNNGT…VERDQIGTSQ (98 aa)) constitute a propeptide that is removed on maturation. In terms of domain architecture, Inhibitor I9 spans 36-113 (SYIVLLKRDI…HVAHVERDQI (78 aa)). Residues 127–405 (NWGLGRLSNS…KLLVNGANGT (279 aa)) form the Peptidase S8 domain. Residues aspartate 159 and histidine 190 each act as charge relay system in the active site. N-linked (GlcNAc...) asparagine glycosylation occurs at asparagine 251. The Charge relay system role is filled by serine 348. The segment covering 383-397 (SASVKNPGPNTTNKL) has biased composition (polar residues). A disordered region spans residues 383-515 (SASVKNPGPN…GWNRPMWWNR (133 aa)). N-linked (GlcNAc...) asparagine glycans are attached at residues asparagine 392 and asparagine 403. Pro residues predominate over residues 432-459 (SQNPPPGQNPPPGQNPPPEQPAPSPPAN).

This sequence belongs to the peptidase S8 family.

It localises to the secreted. In terms of biological role, secreted subtilisin-like serine protease with keratinolytic activity that contributes to pathogenicity. This chain is Subtilisin-like protease 10 (SUB10), found in Trichophyton verrucosum (strain HKI 0517).